Consider the following 695-residue polypeptide: Elongation factor G (695 aa).

A tr-type G domain is found at Asp10–Leu285. Residues Ala19–Thr26, Asp83–His87, and Asn137–Asp140 contribute to the GTP site.

Belongs to the TRAFAC class translation factor GTPase superfamily. Classic translation factor GTPase family. EF-G/EF-2 subfamily.

The protein resides in the cytoplasm. Catalyzes the GTP-dependent ribosomal translocation step during translation elongation. During this step, the ribosome changes from the pre-translocational (PRE) to the post-translocational (POST) state as the newly formed A-site-bound peptidyl-tRNA and P-site-bound deacylated tRNA move to the P and E sites, respectively. Catalyzes the coordinated movement of the two tRNA molecules, the mRNA and conformational changes in the ribosome. This Latilactobacillus sakei subsp. sakei (strain 23K) (Lactobacillus sakei subsp. sakei) protein is Elongation factor G.